Reading from the N-terminus, the 149-residue chain is Nucleoside diphosphate kinase 1 (149 aa).

ATP-binding residues include K9, F57, R85, T91, R102, and N112. H115 serves as the catalytic Pros-phosphohistidine intermediate.

In terms of assembly, homohexamer. It depends on Mg(2+) as a cofactor.

It catalyses the reaction a 2'-deoxyribonucleoside 5'-diphosphate + ATP = a 2'-deoxyribonucleoside 5'-triphosphate + ADP. It carries out the reaction a ribonucleoside 5'-diphosphate + ATP = a ribonucleoside 5'-triphosphate + ADP. Its function is as follows. Major role in the synthesis of nucleoside triphosphates other than ATP. The ATP gamma phosphate is transferred to the NDP beta phosphate via a ping-pong mechanism, using a phosphorylated active-site intermediate. This NDK is microtubule-associated. The protein is Nucleoside diphosphate kinase 1 (NDKR) of Oryza sativa subsp. indica (Rice).